A 76-amino-acid chain; its full sequence is MTDIVVVRVKPGSRKGPLVETGSDAELTIYVRERAVDGKANEAAARLLAAHLQLPRSRVELVAGATSRLKRFRVER.

Belongs to the UPF0235 family.

This Mycobacterium marinum (strain ATCC BAA-535 / M) protein is UPF0235 protein MMAR_2910.